We begin with the raw amino-acid sequence, 260 residues long: Snake venom serine protease pallabin-2 (260 aa).

The first 18 residues, 1–18 (MVLIKVLANLLILQLSYA), serve as a signal peptide directing secretion. Residues 19–24 (QKSSEL) constitute a propeptide that is removed on maturation. The 227-residue stretch at 25 to 251 (IIGGDECNIN…HLDWIENIIA (227 aa)) folds into the Peptidase S1 domain. 6 disulfide bridges follow: cysteine 31/cysteine 163, cysteine 50/cysteine 66, cysteine 98/cysteine 258, cysteine 142/cysteine 212, cysteine 174/cysteine 191, and cysteine 202/cysteine 227. Catalysis depends on histidine 65, which acts as the Charge relay system. The N-linked (GlcNAc...) asparagine glycan is linked to asparagine 103. The active-site Charge relay system is aspartate 110. The active-site Charge relay system is serine 206.

This sequence belongs to the peptidase S1 family. Snake venom subfamily. Monomer. In terms of tissue distribution, expressed by the venom gland.

The protein localises to the secreted. In terms of biological role, snake venom serine protease that may act in the hemostasis system of the prey. The sequence is that of Snake venom serine protease pallabin-2 (JZTHR7) from Gloydius halys (Chinese water mocassin).